A 157-amino-acid chain; its full sequence is MEKVPMTVAGYQTLDEELKRLKTVERPAVIAAIAEARSHGDLSENAEYHAAKERQGWIEGQIAEIEDKIARAQVIDVTKLSGKQVKFGATVSVVDEDTEEEARYQIVGDHEADVKSGRISLSSPLSRAMIGKEVGEVVEVNTPGGVKAYEILKVEWL.

The protein belongs to the GreA/GreB family.

In terms of biological role, necessary for efficient RNA polymerase transcription elongation past template-encoded arresting sites. The arresting sites in DNA have the property of trapping a certain fraction of elongating RNA polymerases that pass through, resulting in locked ternary complexes. Cleavage of the nascent transcript by cleavage factors such as GreA or GreB allows the resumption of elongation from the new 3'terminus. GreA releases sequences of 2 to 3 nucleotides. The chain is Transcription elongation factor GreA from Caulobacter vibrioides (strain ATCC 19089 / CIP 103742 / CB 15) (Caulobacter crescentus).